Here is a 353-residue protein sequence, read N- to C-terminus: Tetraacyldisaccharide 4'-kinase (353 aa).

Residue 49–56 (TAGGTGKT) participates in ATP binding.

Belongs to the LpxK family.

The catalysed reaction is a lipid A disaccharide + ATP = a lipid IVA + ADP + H(+). It participates in glycolipid biosynthesis; lipid IV(A) biosynthesis; lipid IV(A) from (3R)-3-hydroxytetradecanoyl-[acyl-carrier-protein] and UDP-N-acetyl-alpha-D-glucosamine: step 6/6. Its function is as follows. Transfers the gamma-phosphate of ATP to the 4'-position of a tetraacyldisaccharide 1-phosphate intermediate (termed DS-1-P) to form tetraacyldisaccharide 1,4'-bis-phosphate (lipid IVA). This chain is Tetraacyldisaccharide 4'-kinase, found in Chlorobium phaeovibrioides (strain DSM 265 / 1930) (Prosthecochloris vibrioformis (strain DSM 265)).